A 365-amino-acid chain; its full sequence is S-adenosylmethionine:tRNA ribosyltransferase-isomerase (365 aa).

This sequence belongs to the QueA family. As to quaternary structure, monomer.

The protein localises to the cytoplasm. It carries out the reaction 7-aminomethyl-7-carbaguanosine(34) in tRNA + S-adenosyl-L-methionine = epoxyqueuosine(34) in tRNA + adenine + L-methionine + 2 H(+). It participates in tRNA modification; tRNA-queuosine biosynthesis. Functionally, transfers and isomerizes the ribose moiety from AdoMet to the 7-aminomethyl group of 7-deazaguanine (preQ1-tRNA) to give epoxyqueuosine (oQ-tRNA). The chain is S-adenosylmethionine:tRNA ribosyltransferase-isomerase from Prochlorococcus marinus (strain NATL2A).